Consider the following 415-residue polypeptide: MATRNSPMALGTAQGDPGEAGTRPGSDAGLRDTGAATQLKMKPRKVRKIKAVVIDLGSQYCKCGYAGEPRPTYFISSTVGKRCPEAADAGDTRKGTLVGHELLNTETPLKLVNPLKHGIVVDWDCVQDIWEYIFRTAMKILPEEHAVLVSDPPLSPSSNREKYAELMFGTFGIPAMHVTSQSLLSIYSYGKTSGLVVESGHGVSHVVPISEGDVLPGLTSRADYAGGDLTNYLMQLLNEAGHAFTDDHLHIIEHIKKKCCYAAFLPEEELGLVPEELRVDYELPDGKLITIGQERFRCSEMLFQPSLAGSTQPGLPELTAACLGRCQDTGFKEEMAANVLLCGGCTMLDGFPERFQRELSLLCPGDSPAVAAAPERKTSVWTGGSILASLQAFQQLWVSKEEFQERGSMAIYSKC.

The disordered stretch occupies residues 1–35 (MATRNSPMALGTAQGDPGEAGTRPGSDAGLRDTGA). S6 is modified (phosphoserine).

Belongs to the actin family.

Its subcellular location is the cytoplasm. It is found in the cytoskeleton. The chain is Actin-like protein 7B (ACTL7B) from Macaca fascicularis (Crab-eating macaque).